The following is a 218-amino-acid chain: Uracil-DNA glycosylase (218 aa).

This sequence belongs to the uracil-DNA glycosylase (UDG) superfamily. UNG family. Homodimer. Interacts with protein OPG148. Component of the Uracil-DNA glycosylase(UDG)-OPG148-polymerase complex; OPG148 and UDG form a heterodimeric processivity factor that associates with OPG71 to form the processive polymerase holoenzyme.

It catalyses the reaction Hydrolyzes single-stranded DNA or mismatched double-stranded DNA and polynucleotides, releasing free uracil.. In terms of biological role, plays an essential role in viral replication as a component of the DNA polymerase processivity factor. Excises uracil residues from the DNA which can arise as a result of misincorporation of dUMP residues by DNA polymerase or due to deamination of cytosine. The polypeptide is Uracil-DNA glycosylase (OPG116) (Monkeypox virus).